The primary structure comprises 402 residues: Endoplasmic reticulum junction formation protein lunapark-B (402 aa).

At 1–45 (MGAIISRWKTKPSTVELLESLDKDIKDLEEFRAKNQRLLKLWVGR) the chain is on the cytoplasmic side. Residues 46 to 66 (LLFYSSALYLLTCLCVYYLYF) traverse the membrane as a helical segment. Over 67–77 (PQQWGARLITA) the chain is Lumenal. The helical transmembrane segment at 78–98 (LPLLAFPALVLLLRKMLIFLF) threads the bilayer. At 99–402 (SKRTERNNDK…EEQKKEDESN (304 aa)) the chain is on the cytoplasmic side. Residues 100–128 (KRTERNNDKLEDLKTQKRKILEEVMETET) adopt a coiled-coil conformation. Residues 142-240 (ESKKKAEAEA…PGPGSGMRPP (99 aa)) form a disordered region. Over residues 205–222 (SASTPAGASQAETPQQMM) the composition is skewed to polar residues. The segment at 276–301 (CQQCFSHNGMALKEEFEFVAFRCAYC) adopts a C4-type; plays a role in ER morphology zinc-finger fold. Residues 311-402 (RPQAPRLPEF…EEQKKEDESN (92 aa)) form a disordered region. Residues 321-330 (SFERRLRSES) show a composition bias toward basic and acidic residues. A compositionally biased stretch (acidic residues) spans 341–352 (TPEDSDAPEDDM). Residues 385–402 (PHAEAEALEEQKKEDESN) show a composition bias toward basic and acidic residues.

Belongs to the lunapark family. Homodimer; homodimerization requires the C4-type zinc finger motif and decreases during mitosis in a phosphorylation-dependent manner. Phosphorylated. Phosphorylation occurs during interphase. Phosphorylation also occurs during mitosis; these phosphorylations reduce both its homodimerization and the ER three-way tubular junction formation.

It is found in the endoplasmic reticulum membrane. Its function is as follows. Endoplasmic reticulum (ER)-shaping membrane protein that plays a role in determining ER morphology. Involved in the stabilization of nascent three-way ER tubular junctions within the ER network. May also play a role as a curvature-stabilizing protein within three-way ER tubular junction network. The chain is Endoplasmic reticulum junction formation protein lunapark-B (lnpkb) from Danio rerio (Zebrafish).